A 400-amino-acid polypeptide reads, in one-letter code: Nucleoside permease NupC (400 aa).

Residues 1-3 lie on the Cytoplasmic side of the membrane; it reads MDR. Residues 4–24 traverse the membrane as a helical segment; that stretch reads VLHFVLALAVVAILALLVSSD. Residues 25-36 lie on the Periplasmic side of the membrane; the sequence is RKKIRIRYVIQL. The chain crosses the membrane as a helical span at residues 37–57; the sequence is LVIEVLLAWFFLNSDVGLGFV. The Cytoplasmic segment spans residues 58 to 86; it reads KGFSEMFEKLLGFANEGTNFVFGSMNDQG. The helical transmembrane segment at 87–107 threads the bilayer; sequence LAFFFLKVLCPIVFISALIGI. Residues 108–168 lie on the Periplasmic side of the membrane; that stretch reads LQHIRVLPVI…GKISRNRMYT (61 aa). Residues 169 to 189 traverse the membrane as a helical segment; it reads MAATAMSTVSMSIVGAYMTML. At 190 to 192 the chain is on the cytoplasmic side; the sequence is EPK. Residues 193-213 form a helical membrane-spanning segment; it reads YVVAALVLNMFSTFIVLSLIN. Topologically, residues 214–250 are periplasmic; sequence PYRVDASEENIQMSNLHEGQSFFEMLGEYILAGFKVA. The chain crosses the membrane as a helical span at residues 251–271; that stretch reads IIVAAMLIGFIALIAALNALF. Residues 272 to 281 are Cytoplasmic-facing; it reads ATVTGWFGYS. Residues 282 to 302 traverse the membrane as a helical segment; the sequence is ISFQGILGYIFYPIAWVMGVP. The Periplasmic segment spans residues 303 to 341; the sequence is SSEALQVGSIMATKLVSNEFVAMMDLQKIASTLSPRAEG. Residues 342-362 form a helical membrane-spanning segment; it reads IISVFLVSFANFSSIGIIAGA. The Cytoplasmic portion of the chain corresponds to 363–378; it reads VKGLNEEQGNVVSRFG. Residues 379–399 traverse the membrane as a helical segment; sequence LKLVYGSTLVSVLSASIAALV. Residue Leu-400 is a topological domain, periplasmic.

Belongs to the concentrative nucleoside transporter (CNT) (TC 2.A.41) family.

It is found in the cell inner membrane. The enzyme catalyses adenosine(in) + H(+)(in) = adenosine(out) + H(+)(out). The catalysed reaction is uridine(in) + H(+)(in) = uridine(out) + H(+)(out). It catalyses the reaction thymidine(in) + H(+)(in) = thymidine(out) + H(+)(out). It carries out the reaction cytidine(in) + H(+)(in) = cytidine(out) + H(+)(out). The enzyme catalyses 2'-deoxycytidine(in) + H(+)(in) = 2'-deoxycytidine(out) + H(+)(out). Its activity is regulated as follows. Transport is inhibited by the proton uncoupler dinitrophenol. Inhibited by the nucleoside antibiotic showdomycin. Nucleoside transport protein that can transport adenosine, uridine, thymidine, cytidine and deoxycytidine. Shows weak activity with inosine and xanthosine. Transport is driven by a proton motive force. Does not transport guanosine, deoxyguanosine, hypoxanthine or uracil. Also shows activity with the chemotherapeutic drugs 3'-azido-3'-deoxythymidine (AZT), 2',3'- dideoxycytidine (ddC) and 2'-deoxy-2',2'-difluorocytidine (gemcitabine). The polypeptide is Nucleoside permease NupC (Escherichia coli (strain K12)).